Reading from the N-terminus, the 1443-residue chain is Sterol 3-beta-glucosyltransferase ATG26 (1443 aa).

Over residues 1–13 (MATQADDAAASQA) the composition is skewed to low complexity. Disordered stretches follow at residues 1–69 (MATQ…MFMN) and 88–187 (NDRF…LTLT). Residues 18–32 (GDLKEHVHDELDKIQ) are compositionally biased toward basic and acidic residues. The segment covering 49–58 (DSEDSDDEDN) has biased composition (acidic residues). Positions 104 to 117 (QNTRTESIARTSIL) are enriched in polar residues. Residues 125–134 (DKVHRRRKLS) show a composition bias toward basic residues. Residues 164–173 (EVADEADDEH) are compositionally biased toward acidic residues. Residues 240–284 (LKEIFEFDEYEQVIEEYPCWLLQSVLLQGYMYITSKHICFYAYLP) enclose the GRAM 1 domain. Residues 289-385 (EAVKSGYLSK…WVKSLQRVIF (97 aa)) form the PH domain. The interval 463 to 657 (EQVITGDDHD…HGDRHHGIPH (195 aa)) is disordered. Residues 506–525 (LAPMSPLSPRSPSQLSPRAS) are compositionally biased toward low complexity. The segment covering 585-614 (SFLQSSIENPSISTLSPSSYDEPSASQILQ) has biased composition (polar residues). Residues 631–642 (SRKRDRSGKRTP) are compositionally biased toward basic residues. Residues 765-870 (RFRAHFALPE…DCAVTLHQLM (106 aa)) enclose the GRAM 2 domain. Residues 883–910 (DQEEQDDEEAAAAMAERDELQEARQDEF) are a coiled coil. UDP-alpha-D-glucose is bound by residues Ser957, Arg958, Asp960, Ala1265, His1267, His1280, Ser1283, Gly1284, Thr1285, Asp1304, and Gln1305. The segment at 1385-1443 (NAEHGLAEDDDDTEESWTFVGRDEPDPDAVTKKLSDGLAGLGAAGDRPPPLGSQAPTVA) is disordered. A compositionally biased stretch (basic and acidic residues) spans 1405-1419 (GRDEPDPDAVTKKLS).

This sequence belongs to the glycosyltransferase 28 family.

Its subcellular location is the cytoplasm. It localises to the preautophagosomal structure membrane. The enzyme catalyses a sterol + UDP-alpha-D-glucose = a sterol 3-beta-D-glucoside + UDP + H(+). The catalysed reaction is ergosterol + UDP-alpha-D-glucose = ergosteryl 3-beta-D-glucoside + UDP + H(+). Sterol glycosyltransferase responsible for the glycosylation of ergosterol to form ergosterol-glucoside. In Gibberella zeae (strain ATCC MYA-4620 / CBS 123657 / FGSC 9075 / NRRL 31084 / PH-1) (Wheat head blight fungus), this protein is Sterol 3-beta-glucosyltransferase ATG26.